The following is a 485-amino-acid chain: Glutamyl-tRNA(Gln) amidotransferase subunit A (485 aa).

Residues lysine 78 and serine 153 each act as charge relay system in the active site. Residue serine 177 is the Acyl-ester intermediate of the active site.

Belongs to the amidase family. GatA subfamily. As to quaternary structure, heterotrimer of A, B and C subunits.

It carries out the reaction L-glutamyl-tRNA(Gln) + L-glutamine + ATP + H2O = L-glutaminyl-tRNA(Gln) + L-glutamate + ADP + phosphate + H(+). In terms of biological role, allows the formation of correctly charged Gln-tRNA(Gln) through the transamidation of misacylated Glu-tRNA(Gln) in organisms which lack glutaminyl-tRNA synthetase. The reaction takes place in the presence of glutamine and ATP through an activated gamma-phospho-Glu-tRNA(Gln). The protein is Glutamyl-tRNA(Gln) amidotransferase subunit A of Bacillus cereus (strain AH820).